The primary structure comprises 362 residues: Peptide chain release factor 1 (362 aa).

An N5-methylglutamine modification is found at Q236.

Belongs to the prokaryotic/mitochondrial release factor family. In terms of processing, methylated by PrmC. Methylation increases the termination efficiency of RF1.

It localises to the cytoplasm. Functionally, peptide chain release factor 1 directs the termination of translation in response to the peptide chain termination codons UAG and UAA. This is Peptide chain release factor 1 from Lactobacillus gasseri (strain ATCC 33323 / DSM 20243 / BCRC 14619 / CIP 102991 / JCM 1131 / KCTC 3163 / NCIMB 11718 / NCTC 13722 / AM63).